The chain runs to 219 residues: Ion-translocating oxidoreductase complex subunit G (219 aa).

Residues 25–45 form a helical membrane-spanning segment; the sequence is GLLLGLFSLVSALMLALASDA. Residue Thr-187 is modified to FMN phosphoryl threonine.

Belongs to the RnfG family. The complex is composed of six subunits: RnfA, RnfB, RnfC, RnfD, RnfE and RnfG. FMN is required as a cofactor.

It localises to the cellular chromatophore membrane. Functionally, part of a membrane-bound complex that couples electron transfer with translocation of ions across the membrane. The protein is Ion-translocating oxidoreductase complex subunit G of Cereibacter sphaeroides (strain ATCC 17029 / ATH 2.4.9) (Rhodobacter sphaeroides).